Here is a 420-residue protein sequence, read N- to C-terminus: Methylaspartate ammonia-lyase 1 (420 aa).

Position 173 (glutamine 173) interacts with (2S,3S)-3-methyl-L-aspartate. Mg(2+) contacts are provided by aspartate 237, glutamate 272, and aspartate 306. Position 328 (glutamine 328) interacts with (2S,3S)-3-methyl-L-aspartate. Lysine 330 serves as the catalytic Proton acceptor. Residue serine 359 to cysteine 360 participates in (2S,3S)-3-methyl-L-aspartate binding.

Homodimer. The cofactor is Mg(2+).

The catalysed reaction is (2S,3S)-3-methyl-L-aspartate = mesaconate + NH4(+). It functions in the pathway amino-acid degradation; L-glutamate degradation via mesaconate pathway; acetate and pyruvate from L-glutamate: step 2/4. In terms of biological role, involved in the methylaspartate cycle. Catalyzes the formation of the alpha,beta-unsaturated bond by the reversible anti elimination of ammonia from L-threo-beta-methylaspartate (L-threo-(2S,3S)-3-methylaspartate) to give mesaconate. It can also catalyze the amination of fumarate and ethylfumarate, and the deamination of hydroxylamine, hydrazine, methylamine and ethylamine. This Carboxydothermus hydrogenoformans (strain ATCC BAA-161 / DSM 6008 / Z-2901) protein is Methylaspartate ammonia-lyase 1.